We begin with the raw amino-acid sequence, 494 residues long: DDB1- and CUL4-associated factor 4 (494 aa).

Residues methionine 1 to proline 65 form a disordered region. Positions lysine 7–alanine 20 are enriched in basic residues. Residues serine 51–serine 60 are compositionally biased toward low complexity. WD repeat units follow at residues phenylalanine 367–glutamine 406 and glycine 409–threonine 450.

As to quaternary structure, interacts with DDB1 and CUL4A.

The protein operates within protein modification; protein ubiquitination. Its function is as follows. May function as a substrate receptor for CUL4-DDB1 E3 ubiquitin-protein ligase complex. The polypeptide is DDB1- and CUL4-associated factor 4 (DCAF4) (Bos taurus (Bovine)).